An 878-amino-acid chain; its full sequence is Probable LRR receptor-like serine/threonine-protein kinase MEE39 (878 aa).

An N-terminal signal peptide occupies residues 1-25 (MKNLCWVFLSLFWFGVFLIIRFAEG). Residues 26–514 (QNQEGFISLD…IDKPKKKVAV (489 aa)) are Extracellular-facing. Residues N183, N203, N235, N290, N404, N418, N445, and N466 are each glycosylated (N-linked (GlcNAc...) asparagine). 3 LRR repeats span residues 413–436 (RIIS…QNLA), 437–458 (HLES…FLAT), and 461–483 (SLLV…LRDR). A helical transmembrane segment spans residues 515–535 (KVVAPVASIAAIVVVILLFVF). Over 536–878 (KKKMSSRNKP…FDTDVKPKAR (343 aa)) the chain is Cytoplasmic. The residue at position 557 (T557) is a Phosphothreonine. Residues 566 to 840 (KNLQRPLGEG…QVIINLKECL (275 aa)) enclose the Protein kinase domain. Residues 572-580 (LGEGGFGVV) and K594 contribute to the ATP site. A Phosphotyrosine modification is found at Y639. The active-site Proton acceptor is the D691. S726 carries the phosphoserine modification. A phosphothreonine mark is found at T727 and T732. Y740 bears the Phosphotyrosine mark. Residues 849-869 (RNNQNMDSGHSSDQLNVTVTF) show a composition bias toward polar residues. Residues 849-878 (RNNQNMDSGHSSDQLNVTVTFDTDVKPKAR) are disordered.

It belongs to the protein kinase superfamily. Ser/Thr protein kinase family.

It localises to the membrane. The enzyme catalyses L-seryl-[protein] + ATP = O-phospho-L-seryl-[protein] + ADP + H(+). It catalyses the reaction L-threonyl-[protein] + ATP = O-phospho-L-threonyl-[protein] + ADP + H(+). Functionally, receptor-like serine/threonine-kinase required during the endosperm development in seeds. The polypeptide is Probable LRR receptor-like serine/threonine-protein kinase MEE39 (MEE39) (Arabidopsis thaliana (Mouse-ear cress)).